The primary structure comprises 289 residues: Protease HtpX homolog (289 aa).

2 helical membrane passes run 11–31 and 34–54; these read AALF…IAAG and STTP…YGYW. Zn(2+) is bound at residue histidine 138. Glutamate 139 is an active-site residue. Residue histidine 142 participates in Zn(2+) binding. Transmembrane regions (helical) follow at residues 152–172 and 182–202; these read SVVA…LIFG and LATI…QMAI. A Zn(2+)-binding site is contributed by glutamate 207.

Belongs to the peptidase M48B family. Zn(2+) is required as a cofactor.

The protein localises to the cell membrane. The sequence is that of Protease HtpX homolog from Paenarthrobacter aurescens (strain TC1).